The chain runs to 149 residues: SsrA-binding protein (149 aa).

It belongs to the SmpB family.

It is found in the cytoplasm. Its function is as follows. Required for rescue of stalled ribosomes mediated by trans-translation. Binds to transfer-messenger RNA (tmRNA), required for stable association of tmRNA with ribosomes. tmRNA and SmpB together mimic tRNA shape, replacing the anticodon stem-loop with SmpB. tmRNA is encoded by the ssrA gene; the 2 termini fold to resemble tRNA(Ala) and it encodes a 'tag peptide', a short internal open reading frame. During trans-translation Ala-aminoacylated tmRNA acts like a tRNA, entering the A-site of stalled ribosomes, displacing the stalled mRNA. The ribosome then switches to translate the ORF on the tmRNA; the nascent peptide is terminated with the 'tag peptide' encoded by the tmRNA and targeted for degradation. The ribosome is freed to recommence translation, which seems to be the essential function of trans-translation. This is SsrA-binding protein from Wolbachia pipientis subsp. Culex pipiens (strain wPip).